The sequence spans 174 residues: UPF0316 protein Dhaf_3052 (174 aa).

3 helical membrane passes run 4–24, 35–55, and 59–79; these read ILQFVLIIITINITYVTLTTI, VYASLLSVLEVFIYIMGLSII, and LDSYWNIAAYCCGYGVGVYLG.

Belongs to the UPF0316 family.

It is found in the cell membrane. This Desulfitobacterium hafniense (strain DSM 10664 / DCB-2) protein is UPF0316 protein Dhaf_3052.